A 25-amino-acid chain; its full sequence is Alpha-amylase inhibitor (25 aa).

In terms of assembly, monomer or homodimer. May exist both in a glycosylated and in an unglycosylated form.

The protein resides in the secreted. Inhibits alpha-amylases but not trypsin. Is more effective against insect alpha-amylases than those of mammals. The sequence is that of Alpha-amylase inhibitor from Secale cereale (Rye).